Consider the following 145-residue polypeptide: Partner of bursicon (145 aa).

Positions 1 to 28 (MKENFSIMFIHSIFLILIIFIYSNETIA) are cleaved as a signal peptide. Cystine bridges form between cysteine 36/cysteine 94, cysteine 60/cysteine 109, cysteine 69/cysteine 135, cysteine 73/cysteine 137, and cysteine 91/cysteine 140. Residues 36-131 (CETLQSEVHI…NGVMEIKIRE (96 aa)) form the CTCK domain.

As to quaternary structure, heterodimer of burs and pburs.

The protein resides in the secreted. In terms of biological role, final heterodimeric neurohormone released at the end of the molting cycle, involved in the sclerotization (tanning) of the insect cuticle, melanization and wing spreading. The chain is Partner of bursicon (pburs) from Apis mellifera (Honeybee).